The sequence spans 396 residues: Protein NDRG1-B (396 aa).

The tract at residues 326 to 396 (RSRTGSAASS…NTPKSMEVSC (71 aa)) is disordered. A compositionally biased stretch (low complexity) spans 327-340 (SRTGSAASSSSQDG). 4 repeat units span residues 340 to 349 (GNRSRSHTNE), 350 to 359 (GSRSRSQTGD), 360 to 369 (GNRSRAHTGD), and 370 to 379 (GNRSRSHTDT). Residues 340–379 (GNRSRSHTNEGSRSRSQTGDGNRSRAHTGDGNRSRSHTDT) form a 4 X 10 AA tandem repeats of G-[NS]-R-S-R-[AS]-[HQ]-T-[DGN]-[DET] region. A compositionally biased stretch (basic and acidic residues) spans 366–377 (HTGDGNRSRSHT). Polar residues predominate over residues 378 to 390 (DTNNVNSDHNTPK).

This sequence belongs to the NDRG family.

In terms of biological role, may be involved in pronephros development, after specification of the pronephros. In Xenopus laevis (African clawed frog), this protein is Protein NDRG1-B (ndrg1-b).